The sequence spans 123 residues: MFFFNTKPIVFLVVLSVVATFAAATPAMLARGGGSSCAPSTSLKCCDHVGTFSEVSPYINPLELVGVIAALLGLVGGLFTSVTLALTCSGIDIGGSCNSQTVCCENVVFNGLVNVGCTAIDIL.

Positions 1-24 (MFFFNTKPIVFLVVLSVVATFAAA) are cleaved as a signal peptide. 4 cysteine pairs are disulfide-bonded: C37/C103, C45/C97, C46/C88, and C104/C117.

It belongs to the fungal hydrophobin family. As to quaternary structure, self-assembles to form functional amyloid fibrils called rodlets. Self-assembly into fibrillar rodlets occurs spontaneously at hydrophobic:hydrophilic interfaces and the rodlets further associate laterally to form amphipathic monolayers.

It is found in the secreted. The protein resides in the cell wall. Aerial growth, conidiation, and dispersal of filamentous fungi in the environment rely upon a capability of their secreting small amphipathic proteins called hydrophobins (HPBs) with low sequence identity. Class I can self-assemble into an outermost layer of rodlet bundles on aerial cell surfaces, conferring cellular hydrophobicity that supports fungal growth, development and dispersal; whereas Class II form highly ordered films at water-air interfaces through intermolecular interactions but contribute nothing to the rodlet structure. The sequence is that of Unclassified hydrophobin 9 from Pleurotus ostreatus (strain PC15) (Oyster mushroom).